The following is a 160-amino-acid chain: Ureidoglycolate lyase (160 aa).

This sequence belongs to the ureidoglycolate lyase family. Homodimer. Ni(2+) serves as cofactor.

The catalysed reaction is (S)-ureidoglycolate = urea + glyoxylate. The protein operates within nitrogen metabolism; (S)-allantoin degradation. In terms of biological role, catalyzes the catabolism of the allantoin degradation intermediate (S)-ureidoglycolate, generating urea and glyoxylate. Involved in the utilization of allantoin as nitrogen source. The polypeptide is Ureidoglycolate lyase (Salmonella enteritidis).